Here is a 500-residue protein sequence, read N- to C-terminus: Cytochrome P450 monooxygenase acrD (500 aa).

The chain crosses the membrane as a helical span at residues 13–32 (PYLSGTNLVWTLLLVGYIIP). Asn-210 and Asn-414 each carry an N-linked (GlcNAc...) asparagine glycan. Residue Cys-447 coordinates heme.

It belongs to the cytochrome P450 family. It depends on heme as a cofactor.

The protein resides in the membrane. It functions in the pathway secondary metabolite biosynthesis. Cytochrome P450 monooxygenase; part of the cluster that mediates the biosynthesis of acurin A, a highly reduced polyketide coupled to a serine via a peptide bond. The activities of the highly reducing polyketide synthase acrA and the nonribosomal peptide synthetase acrB are collectively responsible for the synthesis of the acurin A core structure with a heptaketide backbone produced by acrA covalently fused to a L-serine by acrB. After the formation of the PK-NRP hybrid product, it is detached from acrB by reductive release to set up the formation of the lactam ring by aldol condensation. The hydrolyase acrC then catalyzes water loss to generate a double bond in the ring. This double bond is probably reduced, which is followed by three oxidations at C-22 to generate the carboxylic acid moiety, involving probably the FAD-binding monooxygenase acrE and the cytochrome P450 monooxygenases acrD and acrF. Finally, a last methylation step performed by the O-methyltransferase acrG leads to the production of acurin A. The chain is Cytochrome P450 monooxygenase acrD from Aspergillus aculeatus (strain ATCC 16872 / CBS 172.66 / WB 5094).